The following is a 175-amino-acid chain: Crossover junction endodeoxyribonuclease RuvC (175 aa).

Residues aspartate 8, glutamate 68, and aspartate 140 contribute to the active site. Residues aspartate 8, glutamate 68, and aspartate 140 each contribute to the Mg(2+) site.

It belongs to the RuvC family. Homodimer which binds Holliday junction (HJ) DNA. The HJ becomes 2-fold symmetrical on binding to RuvC with unstacked arms; it has a different conformation from HJ DNA in complex with RuvA. In the full resolvosome a probable DNA-RuvA(4)-RuvB(12)-RuvC(2) complex forms which resolves the HJ. Requires Mg(2+) as cofactor.

The protein localises to the cytoplasm. The enzyme catalyses Endonucleolytic cleavage at a junction such as a reciprocal single-stranded crossover between two homologous DNA duplexes (Holliday junction).. Its function is as follows. The RuvA-RuvB-RuvC complex processes Holliday junction (HJ) DNA during genetic recombination and DNA repair. Endonuclease that resolves HJ intermediates. Cleaves cruciform DNA by making single-stranded nicks across the HJ at symmetrical positions within the homologous arms, yielding a 5'-phosphate and a 3'-hydroxyl group; requires a central core of homology in the junction. The consensus cleavage sequence is 5'-(A/T)TT(C/G)-3'. Cleavage occurs on the 3'-side of the TT dinucleotide at the point of strand exchange. HJ branch migration catalyzed by RuvA-RuvB allows RuvC to scan DNA until it finds its consensus sequence, where it cleaves and resolves the cruciform DNA. The polypeptide is Crossover junction endodeoxyribonuclease RuvC (Pseudomonas fluorescens (strain Pf0-1)).